The following is a 402-amino-acid chain: Tryptophan--tRNA ligase, cytoplasmic (402 aa).

Positions 97-106 (PSSEALHLGH) match the 'HIGH' region motif. The 'KMSKS' region motif lies at 280 to 284 (KMSAS).

The protein belongs to the class-I aminoacyl-tRNA synthetase family.

It is found in the cytoplasm. Its subcellular location is the cytosol. It catalyses the reaction tRNA(Trp) + L-tryptophan + ATP = L-tryptophyl-tRNA(Trp) + AMP + diphosphate + H(+). This is Tryptophan--tRNA ligase, cytoplasmic from Arabidopsis thaliana (Mouse-ear cress).